The chain runs to 167 residues: Ureidoglycolate lyase (167 aa).

It belongs to the ureidoglycolate lyase family. As to quaternary structure, homodimer. Ni(2+) serves as cofactor.

It carries out the reaction (S)-ureidoglycolate = urea + glyoxylate. The protein operates within nitrogen metabolism; (S)-allantoin degradation. Catalyzes the catabolism of the allantoin degradation intermediate (S)-ureidoglycolate, generating urea and glyoxylate. Involved in the utilization of allantoin as nitrogen source. The sequence is that of Ureidoglycolate lyase from Pseudomonas putida (strain W619).